A 294-amino-acid polypeptide reads, in one-letter code: 7,8-dihydropterin-6-methyl-4-(beta-D-ribofuranosyl)-aminobenzene-5'-phosphate synthase (294 aa).

Substrate-binding residues include Glu116, Asp186, Lys228, and His265.

It belongs to the metallo-beta-lactamase superfamily. Requires Mg(2+) as cofactor.

It carries out the reaction 4-(beta-D-ribofuranosyl)aminobenzene 5'-phosphate + (7,8-dihydropterin-6-yl)methyl diphosphate = N-[(7,8-dihydropterin-6-yl)methyl]-4-(beta-D-ribofuranosyl)aniline 5'-phosphate + diphosphate. It participates in cofactor biosynthesis; 5,6,7,8-tetrahydromethanopterin biosynthesis. In terms of biological role, catalyzes the condensation of 6-hydroxymethyl-7,8-dihydropterin pyrophosphate (DHPP) with 4-(beta-D-ribofuranosyl)-aminobenzene-5'-phosphate (beta-RFA-P) to form 7,8-dihydropterin-6-methyl-4-(beta-D-ribofuranosyl)-aminobenzene-5'-phosphate, a precursor in the biosynthesis of 5,6,7,8-tetrahydromethanopterin (H4MPT). To a lesser extent, is able to condense beta-RFA-P with another arylamine, 1-(4-aminophenyl)-1-deoxy-D-ribitol (APDR), to form 7,8-dihydropterin-6-methyl-1-(4-aminophenyl)-1-deoxy-D-ribitol. Dephosphorylated beta-RFA-P is not a substrate. In Methanocaldococcus jannaschii (strain ATCC 43067 / DSM 2661 / JAL-1 / JCM 10045 / NBRC 100440) (Methanococcus jannaschii), this protein is 7,8-dihydropterin-6-methyl-4-(beta-D-ribofuranosyl)-aminobenzene-5'-phosphate synthase.